Consider the following 95-residue polypeptide: Cell division topological specificity factor (95 aa).

This sequence belongs to the MinE family.

Its function is as follows. Prevents the cell division inhibition by proteins MinC and MinD at internal division sites while permitting inhibition at polar sites. This ensures cell division at the proper site by restricting the formation of a division septum at the midpoint of the long axis of the cell. This chain is Cell division topological specificity factor, found in Synechococcus sp. (strain CC9902).